A 235-amino-acid chain; its full sequence is Fms-related tyrosine kinase 3 ligand (235 aa).

The first 26 residues, 1 to 26, serve as a signal peptide directing secretion; it reads MTVLAPAWSPTTYLLLLLLLSSGLSG. At 27 to 184 the chain is on the extracellular side; it reads TQDCSFQHSP…EATAPTAPQP (158 aa). Cystine bridges form between Cys-30–Cys-111, Cys-70–Cys-153, and Cys-119–Cys-158. Asn-126 and Asn-149 each carry an N-linked (GlcNAc...) asparagine glycan. The helical transmembrane segment at 185–205 threads the bilayer; it reads PLLLLLLLPVGLLLLAAAWCL. The Cytoplasmic portion of the chain corresponds to 206 to 235; sequence HWQRTRRRTPRPGEQVPPVPSPQDLLLVEH. The interval 213–235 is disordered; sequence RTPRPGEQVPPVPSPQDLLLVEH.

In terms of assembly, homodimer (isoform 2).

It localises to the cell membrane. The protein localises to the secreted. Stimulates the proliferation of early hematopoietic cells by activating FLT3. Synergizes well with a number of other colony stimulating factors and interleukins. Required for the development of B cells, and dendritic cells (DCs). The protein is Fms-related tyrosine kinase 3 ligand (FLT3LG) of Homo sapiens (Human).